We begin with the raw amino-acid sequence, 32 residues long: Protamine-1 (32 aa).

A disordered region spans residues 1–32 (PRRRRASSGRPVRRRRRPKMSRRRRRGGRRRR).

As to expression, testis.

It is found in the nucleus. The protein resides in the chromosome. Functionally, protamines substitute for histones in the chromatin of sperm during the haploid phase of spermatogenesis. They compact sperm DNA into a highly condensed, stable and inactive complex. In Esox lucius (Northern pike), this protein is Protamine-1.